Here is a 557-residue protein sequence, read N- to C-terminus: Selenoprotein N (557 aa).

Over residues M1–G21 the composition is skewed to basic and acidic residues. The disordered stretch occupies residues M1 to G28. A helical membrane pass occupies residues I35–L55. A non-standard amino acid (selenocysteine) is located at residue U430. 2 N-linked (GlcNAc...) asparagine glycosylation sites follow: N451 and N499.

Interacts with ryr3.

The protein localises to the endoplasmic reticulum membrane. Its function is as follows. Plays an important role in cell protection against oxidative stress and in the regulation of redox-related calcium homeostasis. Regulates the calcium level of the ER by protecting the calcium pump ATP2A2 against the oxidoreductase ERO1A-mediated oxidative damage. Acts as a modulator of ryanodine receptor (RyR) activity: protects RyR from oxidation due to increased oxidative stress, or directly controls the RyR redox state, regulating the RyR-mediated calcium mobilization required for normal muscle development and differentiation. Plays an important role in muscle development and differentiation during early development. Required for development of the slow muscle fiber lineage. Required for the correct organization and attachment of the myofibrils, as well as for the continuity and integrity of the connective tissue that forms the myoseptum. This chain is Selenoprotein N, found in Danio rerio (Zebrafish).